The primary structure comprises 348 residues: Trace amine-associated receptor 9 (348 aa).

Residues 1–33 lie on the Extracellular side of the membrane; the sequence is MVNNFSQAEAVELCYKNVNESCIKTPYSPGPRS. Asn-4 and Asn-19 each carry an N-linked (GlcNAc...) asparagine glycan. Intrachain disulfides connect Cys-22-Cys-186 and Cys-105-Cys-190. The helical transmembrane segment at 34-58 threads the bilayer; it reads ILYAVLGFGAVLAAFGNLLVMIAIL. Topologically, residues 59–68 are cytoplasmic; that stretch reads HFKQLHTPTN. A helical transmembrane segment spans residues 69–90; the sequence is FLIASLACADFLVGVTVMPFST. Residues 91-105 lie on the Extracellular side of the membrane; sequence VRSVESCWYFGDSYC. Residues 106–128 traverse the membrane as a helical segment; sequence KFHTCFDTSFCFASLFHLCCISV. Residues Asp-112 and Thr-113 each contribute to the spermidine site. Topologically, residues 129-148 are cytoplasmic; the sequence is DRYIAVTDPLTYPTKFTVSV. The chain crosses the membrane as a helical span at residues 149–170; the sequence is SGICIVLSWFFSVTYSFSIFYT. At 171-196 the chain is on the extracellular side; that stretch reads GANEEGIEELVVALTCVGGCQAPLNQ. The tract at residues 174–187 is extracellular Loop 2 (ECL2); sequence EEGIEELVVALTCV. Residues 197 to 218 form a helical membrane-spanning segment; that stretch reads NWVLLCFLLFFIPNVAMVFIYS. At 219–256 the chain is on the cytoplasmic side; sequence KIFLVAKHQARKIESTASQAQSSSESYKERVAKRERKA. Residues 257-280 traverse the membrane as a helical segment; sequence AKTLGIAMAAFLVSWLPYLVDAVI. Residues 281-293 lie on the Extracellular side of the membrane; that stretch reads DAYMNFITPPYVY. Residues 294-314 form a helical membrane-spanning segment; the sequence is EILVWCVYYNSAMNPLIYAFF. At 315–348 the chain is on the cytoplasmic side; that stretch reads YQWFGKAIKLIVSGKVLRTDSSTTNLFSEEVETD.

This sequence belongs to the G-protein coupled receptor 1 family.

It is found in the cell membrane. Functionally, olfactory receptor specific for trace amines, such as N,N-dimethylcyclohexylamine (DMCHA) and beta-phenylethylamine (beta-PEA). In contrast to mouse and rat orthologs, not activated by triethylamine, cadaverine (CAD) or spermidine. Trace amine compounds are enriched in animal body fluids and act on trace amine-associated receptors (TAARs) to elicit both intraspecific and interspecific innate behaviors. Trace amine-binding causes a conformation change that triggers signaling via G(s)-class of G alpha proteins (GNAL or GNAS). In mature olfactory sensory neurons, TAAR9 is coupled with GNAL/G(olf)G alpha protein and mediates activation of adenylate cyclase activity to activate cAMP signaling and eventually transmit odorant signals to achieve membrane depolarization. In immature olfactory sensory neurons, TAAR9 is coupled with GNAS/G(s) G alpha proteins. In Homo sapiens (Human), this protein is Trace amine-associated receptor 9.